We begin with the raw amino-acid sequence, 456 residues long: Putative E3 ubiquitin-protein ligase XBAT31 (456 aa).

5 ANK repeats span residues 45 to 74 (DRHSVLHVAAANGQIEILSLLLERFTNPDL), 78 to 107 (HKQTPLMLAAMYGRISCVKKLAEVGANILM), 112 to 141 (NRRTCLHYAAYYGHANCVQAILSAAQSSPV), 157 to 186 (KGATPLHLAARQRRPECVNVLLDSGSLVCA), and 194 to 224 (PGSTPLHLAARSGSIDCVRKLLAWGADRLQR). Residues 319–368 (CCICFEQVCTIEVKDCGHQMCAQCTLALCCHNKPNPTTSTVTPPVCPFCR) form an RING-type zinc finger.

It carries out the reaction S-ubiquitinyl-[E2 ubiquitin-conjugating enzyme]-L-cysteine + [acceptor protein]-L-lysine = [E2 ubiquitin-conjugating enzyme]-L-cysteine + N(6)-ubiquitinyl-[acceptor protein]-L-lysine.. The protein operates within protein modification; protein ubiquitination. No E3 ubiquitin-protein ligase activity observed when associated with the E2 enzyme UBC8 in vitro. The sequence is that of Putative E3 ubiquitin-protein ligase XBAT31 (XBAT31) from Arabidopsis thaliana (Mouse-ear cress).